The following is a 178-amino-acid chain: Alkyl hydroperoxide reductase AhpD (178 aa).

Residue cysteine 131 is the Proton donor of the active site. Cysteines 131 and 134 form a disulfide. Cysteine 134 (cysteine sulfenic acid (-SOH) intermediate) is an active-site residue.

It belongs to the AhpD family. In terms of assembly, homotrimer.

It carries out the reaction N(6)-[(R)-dihydrolipoyl]-L-lysyl-[lipoyl-carrier protein] + a hydroperoxide = N(6)-[(R)-lipoyl]-L-lysyl-[lipoyl-carrier protein] + an alcohol + H2O. Its function is as follows. Antioxidant protein with alkyl hydroperoxidase activity. Required for the reduction of the AhpC active site cysteine residues and for the regeneration of the AhpC enzyme activity. The chain is Alkyl hydroperoxide reductase AhpD from Streptomyces coelicolor (strain ATCC BAA-471 / A3(2) / M145).